Consider the following 777-residue polypeptide: Cyclin-F (777 aa).

Residues Lys20–Arg28 carry the Nuclear localization signal 1 motif. The 48-residue stretch at Asn29 to Ala76 folds into the F-box domain. In terms of domain architecture, Cyclin N-terminal spans Gln288 to Ile405. Short sequence motifs (d box) lie at residues Arg310–Leu313, Arg343–Leu346, and Arg349–Leu352. Disordered stretches follow at residues Gln544–Ala591 and Gln651–Ser777. Positions Arg568–Arg574 match the Nuclear localization signal 2 motif. The segment at Arg582–Lys761 is PEST. Low complexity-rich tracts occupy residues Ser695 to Ser708 and Ser719 to Thr731. Over residues Pro751–Val767 the composition is skewed to polar residues. A D box 4 motif is present at residues Arg762–Leu765. Residues His768–Ser777 show a composition bias toward basic and acidic residues.

This sequence belongs to the cyclin family. Cyclin AB subfamily. Component of the SCF(CCNF) complex consisting of CUL1, RBX1, SKP1 and CCNF. Interacts with SKP1. Interacts with CUL1. Interacts with CCNB1; interaction is required for nuclear localization of CCNB1. Interacts with CCP110; this interaction leads to CCP110 ubiquitination and degradation via the proteasome pathway. Interacts (via the Cyclin N-terminal domain) with MYBL2/BMYB. Interacts with FZR1/CDH1 (via N-terminus). Interacts with RRM2 (via Cy motif and when phosphorylated at 'Thr-33'); the interaction occurs exclusively in G2 and early M. Interacts with CDC6 (via Cy motif); the interaction takes place during G2 and M phase. Degraded when the spindle assembly checkpoint is activated during the G2-M transition. Degradation is not dependent on the proteasome or ubiquitin and depends on the C-terminal PEST sequence. Post-translationally, phosphorylated just before cells enter into mitosis. In terms of processing, ubiquitinated by the anaphase-promoting complex (APC/C); leading to its degradation by the proteasome.

Its subcellular location is the nucleus. The protein resides in the cytoplasm. The protein localises to the perinuclear region. It localises to the cytoskeleton. It is found in the microtubule organizing center. Its subcellular location is the centrosome. The protein resides in the centriole. Substrate recognition component of a SCF (SKP1-CUL1-F-box protein) E3 ubiquitin-protein ligase complex which mediates the ubiquitination and subsequent proteasomal degradation of target proteins. The SCF(CCNF) E3 ubiquitin-protein ligase complex is an integral component of the ubiquitin proteasome system (UPS) and links proteasome degradation to the cell cycle. Mediates the substrate recognition and the proteasomal degradation of various target proteins involved in the regulation of cell cycle progression and in the maintenance of genome stability. Mediates the ubiquitination and subsequent proteasomal degradation of CP110 during G2 phase, thereby acting as an inhibitor of centrosome reduplication. In G2, mediates the ubiquitination and proteasomal degradation of CDC6, thereby suppressing DNA re-replication and preventing genome instability. Involved in the ubiquitination and degradation of the substrate adapter CDH1 of the anaphase-promoting complex (APC/C), thereby acting as an antagonist of APC/C in regulating G1 progression and S phase entry. May play a role in the G2 cell cycle checkpoint control after DNA damage, possibly by promoting the ubiquitination of MYBL2/BMYB. The sequence is that of Cyclin-F (Ccnf) from Mus musculus (Mouse).